The sequence spans 51 residues: Otoconin-90 (51 aa).

Belongs to the phospholipase A2 family. Interacts with OTOL1.

It localises to the secreted. Functionally, major protein of the otoconia, a calcium carbonate structure in the saccule and utricle of the ear. Together with OTOL1, acts as a scaffold for otoconia biomineralization: sequesters calcium and forms interconnecting fibrils between otoconia that are incorporated into the calcium crystal structure. Together with OTOL1, modulates calcite crystal morphology and growth kinetics. It is unlikely that this protein has phospholipase A2 activity. The polypeptide is Otoconin-90 (OC90) (Cavia porcellus (Guinea pig)).